Reading from the N-terminus, the 90-residue chain is [Leu8]-phyllolitorin (90 aa).

The N-terminal stretch at Met1–Cys30 is a signal peptide. A propeptide spanning residues Lys31 to Arg48 is cleaved from the precursor. Residue Gln49 is modified to Pyrrolidone carboxylic acid. A Methionine amide modification is found at Met57. Residues Ser61–Asp90 constitute a propeptide that is removed on maturation.

Belongs to the bombesin/neuromedin-B/ranatensin family. In terms of tissue distribution, expressed by the skin glands.

The protein localises to the secreted. This is [Leu8]-phyllolitorin from Phyllomedusa sauvagei (Sauvage's leaf frog).